The sequence spans 308 residues: uncharacterized protein (308 aa).

The 77-residue stretch at 11–87 folds into the S4 RNA-binding domain; that stretch reads KRLDSLLASL…LKLEVLFEDK (77 aa). Aspartate 131 is an active-site residue.

It belongs to the pseudouridine synthase RluA family.

It carries out the reaction a uridine in RNA = a pseudouridine in RNA. This is an uncharacterized protein from Mycoplasma genitalium (strain ATCC 33530 / DSM 19775 / NCTC 10195 / G37) (Mycoplasmoides genitalium).